We begin with the raw amino-acid sequence, 686 residues long: Osmo-dependent choline transporter BetT2 (686 aa).

Residues 1-22 (MATDNPRAVDDQETHPKDRLNR) are Cytoplasmic-facing. A helical transmembrane segment spans residues 23–43 (VVFYVSALIILIFSLTTILFN). The Periplasmic portion of the chain corresponds to 44–60 (DFANRALNQVLDWVSST). The helical transmembrane segment at 61–81 (FSWYYLLAATLYMVFVIFIAC) threads the bilayer. At 82–100 (SRYGNIKLGPKHSKPEFSL) the chain is on the cytoplasmic side. Residues 101 to 121 (LSWSAMLFSAGIGIDLMFFSV) form a helical membrane-spanning segment. Topologically, residues 122–150 (AEPLSHYMHPPVGEGQTYEAARQGMVWTL) are periplasmic. Residues 151 to 171 (FHYGLTGWCMYALIGMALGYF) traverse the membrane as a helical segment. Residues 172–203 (SYRYNLPLTIRSALYPIFGKKINGPIGHSVDT) lie on the Cytoplasmic side of the membrane. The helical transmembrane segment at 204–224 (AAVIGTIFGIATTCGIGVVQL) threads the bilayer. Residues 225-237 (NYGLHVLFDLPEN) lie on the Periplasmic side of the membrane. Residues 238–258 (LWVQTALILVAVIITIISVTS) form a helical membrane-spanning segment. The Cytoplasmic portion of the chain corresponds to 259-265 (GVNKGLR). Residues 266–286 (ILSEVNIYVSVGLMLFILFLG) traverse the membrane as a helical segment. Residues 287–325 (NTEFLLNALVQNVGDYLSRFPSLALESFAFDQPKEWMNS) lie on the Periplasmic side of the membrane. Residues 326–346 (WTLFFWAWWVAWSPFVGLFLA) form a helical membrane-spanning segment. The Cytoplasmic segment spans residues 347 to 356 (RISRGRTIRE). Residues 357 to 377 (FVSGTLIIPLLFTLTWLSIFG) form a helical membrane-spanning segment. At 378–412 (NSALHNVIFDGNIALAETVLSNPAHGFYDLLAQYP) the chain is on the periplasmic side. The chain crosses the membrane as a helical span at residues 413–433 (WFPFIAGVATITGLLFYVTSA). Residues 434-459 (DSGALVLGNFTTQFTNIDHDAPRWLS) are Cytoplasmic-facing. Residues 460 to 480 (VFWAVAIGLLTLAMLMTNGIT) form a helical membrane-spanning segment. Topologically, residues 481–484 (ALQN) are periplasmic. A helical membrane pass occupies residues 485–505 (ATIIMGLPFSFVMFLVMAGLY). The Cytoplasmic segment spans residues 506–686 (KSLRLEDYRQ…NRPLFPDPKA (181 aa)).

The protein belongs to the BCCT transporter (TC 2.A.15) family.

It is found in the cell inner membrane. Functionally, uptake of choline in the presence of high salinity. May primarily serve for osmoprotection. The sequence is that of Osmo-dependent choline transporter BetT2 from Acinetobacter baylyi (strain ATCC 33305 / BD413 / ADP1).